A 102-amino-acid chain; its full sequence is Large ribosomal subunit protein uL24 (102 aa).

This sequence belongs to the universal ribosomal protein uL24 family. Part of the 50S ribosomal subunit.

Functionally, one of two assembly initiator proteins, it binds directly to the 5'-end of the 23S rRNA, where it nucleates assembly of the 50S subunit. One of the proteins that surrounds the polypeptide exit tunnel on the outside of the subunit. The chain is Large ribosomal subunit protein uL24 from Cupriavidus metallidurans (strain ATCC 43123 / DSM 2839 / NBRC 102507 / CH34) (Ralstonia metallidurans).